Consider the following 251-residue polypeptide: 2,3-bisphosphoglycerate-dependent phosphoglycerate mutase (251 aa).

Residues 11–18 (RHGNSDWN), 24–25 (TG), Arg-63, 90–93 (ERHY), Lys-101, 117–118 (RR), and 185–186 (GN) contribute to the substrate site. The active-site Tele-phosphohistidine intermediate is the His-12. Glu-90 acts as the Proton donor/acceptor in catalysis.

It belongs to the phosphoglycerate mutase family. BPG-dependent PGAM subfamily.

It carries out the reaction (2R)-2-phosphoglycerate = (2R)-3-phosphoglycerate. It functions in the pathway carbohydrate degradation; glycolysis; pyruvate from D-glyceraldehyde 3-phosphate: step 3/5. Functionally, catalyzes the interconversion of 2-phosphoglycerate and 3-phosphoglycerate. In Clavibacter sepedonicus (Clavibacter michiganensis subsp. sepedonicus), this protein is 2,3-bisphosphoglycerate-dependent phosphoglycerate mutase.